Consider the following 732-residue polypeptide: 1,4-alpha-glucan branching enzyme GlgB 1 (732 aa).

The active-site Nucleophile is the Asp411. The active-site Proton donor is the Glu464.

Belongs to the glycosyl hydrolase 13 family. GlgB subfamily. Monomer.

It carries out the reaction Transfers a segment of a (1-&gt;4)-alpha-D-glucan chain to a primary hydroxy group in a similar glucan chain.. It functions in the pathway glycan biosynthesis; glycogen biosynthesis. Its function is as follows. Catalyzes the formation of the alpha-1,6-glucosidic linkages in glycogen by scission of a 1,4-alpha-linked oligosaccharide from growing alpha-1,4-glucan chains and the subsequent attachment of the oligosaccharide to the alpha-1,6 position. The polypeptide is 1,4-alpha-glucan branching enzyme GlgB 1 (Xanthomonas euvesicatoria pv. vesicatoria (strain 85-10) (Xanthomonas campestris pv. vesicatoria)).